The sequence spans 347 residues: Protein RecA (347 aa).

65-72 is a binding site for ATP; the sequence is GPESSGKT. Residues 325–347 are disordered; it reads KLGISDGDVEETEDAPKSLFDEE. The span at 338–347 shows a compositional bias: basic and acidic residues; sequence DAPKSLFDEE.

Belongs to the RecA family.

It localises to the cytoplasm. Functionally, can catalyze the hydrolysis of ATP in the presence of single-stranded DNA, the ATP-dependent uptake of single-stranded DNA by duplex DNA, and the ATP-dependent hybridization of homologous single-stranded DNAs. It interacts with LexA causing its activation and leading to its autocatalytic cleavage. The sequence is that of Protein RecA from Staphylococcus aureus (strain Mu3 / ATCC 700698).